Consider the following 351-residue polypeptide: MVTKDSIIRDLERENVGPEFGEFLNTLQTDLNSEKPPIEQVKSQLETHFNLAHETQEFSRKNDNAPVDKLLTNYYNNYEVNVLEFVLQMGFSRDLSIPLNVWFVLDMISQLSTSKQDLPLDYYLVLNNSQTGKYSDFVRYLIYEAVGAEIHCFEQGSMPEQYRSSRWEDKVKGPALANRGPIRGNVGAGDRKITFHLLCKKTARMILVGDDRETDFEMSDRSFVTLLLDYYQRVGTTKKIDLLLLTNNFDTNMNNKLQQLKILESLNMLKSNCYVLDYQITVDQVTANFNSYVEGIPAFRRHEIANFLKKRKTPKNADELIFKYVGRWNICYQKKFHQGNISIHQISGYLD.

Heterododecamer of 4 alpha, 4 beta and 4 gamma chains. The gamma chain bridges the N-terminal halves of the alpha and beta subunits.

The protein resides in the cytoplasm. It participates in carbohydrate degradation; glycolysis; D-glyceraldehyde 3-phosphate and glycerone phosphate from D-glucose: step 3/4. In terms of biological role, structural subunit of pyrophosphate--fructose 6-phosphate 1-phosphotransferase. Not required for catalytic activity. Fine-tunes allosteric regulation of the ATP-PFK by ATP, fructose 2,6-bisphosphate and AMP. This is ATP-dependent 6-phosphofructokinase subunit gamma (PFK3) from Komagataella pastoris (Yeast).